Here is a 164-residue protein sequence, read N- to C-terminus: S-ribosylhomocysteine lyase (164 aa).

Fe cation is bound by residues H61, H65, and C131.

Belongs to the LuxS family. As to quaternary structure, homodimer. Fe cation serves as cofactor.

The enzyme catalyses S-(5-deoxy-D-ribos-5-yl)-L-homocysteine = (S)-4,5-dihydroxypentane-2,3-dione + L-homocysteine. Its function is as follows. Involved in the synthesis of autoinducer 2 (AI-2) which is secreted by bacteria and is used to communicate both the cell density and the metabolic potential of the environment. The regulation of gene expression in response to changes in cell density is called quorum sensing. Catalyzes the transformation of S-ribosylhomocysteine (RHC) to homocysteine (HC) and 4,5-dihydroxy-2,3-pentadione (DPD). The sequence is that of S-ribosylhomocysteine lyase from Bifidobacterium longum subsp. infantis (strain ATCC 15697 / DSM 20088 / JCM 1222 / NCTC 11817 / S12).